The primary structure comprises 284 residues: HTH-type transcriptional activator RhaR (284 aa).

Residues 181–279 form the HTH araC/xylS-type domain; sequence DMLMNALRAS…GVSPSAYRQR (99 aa). 2 consecutive DNA-binding regions (H-T-H motif) follow at residues 198–219 and 246–269; these read EAFC…KEQT and IGDI…HQAF.

In terms of assembly, binds DNA as a dimer.

The protein resides in the cytoplasm. Its function is as follows. Activates expression of the rhaSR operon in response to L-rhamnose. The sequence is that of HTH-type transcriptional activator RhaR from Pectobacterium carotovorum subsp. carotovorum (strain PC1).